The sequence spans 377 residues: ATP-dependent (S)-NAD(P)H-hydrate dehydratase (377 aa).

Positions 10–366 (LLHLSRQLIQ…EYLHESFTEL (357 aa)) constitute a YjeF C-terminal domain. Residues Gly148 and 201–207 (NVVEFQR) each bind (6S)-NADPHX. ATP contacts are provided by residues 245 to 249 (KGEHD) and 264 to 273 (GSNKRVGGQG). Asp274 serves as a coordination point for (6S)-NADPHX.

This sequence belongs to the NnrD/CARKD family. Mg(2+) serves as cofactor.

The protein localises to the cytoplasm. The catalysed reaction is (6S)-NADHX + ATP = ADP + phosphate + NADH + H(+). It catalyses the reaction (6S)-NADPHX + ATP = ADP + phosphate + NADPH + H(+). Its function is as follows. Catalyzes the dehydration of the S-form of NAD(P)HX at the expense of ATP, which is converted to ADP. Together with NAD(P)HX epimerase, which catalyzes the epimerization of the S- and R-forms, the enzyme allows the repair of both epimers of NAD(P)HX, a damaged form of NAD(P)H that is a result of enzymatic or heat-dependent hydration. In Candida albicans (strain SC5314 / ATCC MYA-2876) (Yeast), this protein is ATP-dependent (S)-NAD(P)H-hydrate dehydratase.